We begin with the raw amino-acid sequence, 88 residues long: Long neurotoxin LNTX-1 (88 aa).

The N-terminal stretch at Met-1–Ala-21 is a signal peptide. Disulfide bonds link Cys-24–Cys-42, Cys-35–Cys-63, Cys-48–Cys-52, Cys-67–Cys-78, and Cys-79–Cys-84.

This sequence belongs to the three-finger toxin family. Long-chain subfamily. Type II alpha-neurotoxin sub-subfamily. As to expression, expressed by the venom gland.

It localises to the secreted. Binds with high affinity to muscular (alpha-1/CHRNA1) and neuronal (alpha-7/CHRNA7) nicotinic acetylcholine receptor (nAChR) and inhibits acetylcholine from binding to the receptor, thereby impairing neuromuscular and neuronal transmission. This Demansia vestigiata (Lesser black whip snake) protein is Long neurotoxin LNTX-1.